The primary structure comprises 81 residues: Cysteine-rich and transmembrane domain-containing protein PCC1 (81 aa).

Residues 1–22 show a composition bias toward polar residues; it reads MNQSAQNYFSVQKPSETSSGPY. Residues 1–34 form a disordered region; that stretch reads MNQSAQNYFSVQKPSETSSGPYTSPPPIGYPTRD. The helical transmembrane segment at 56–74 threads the bilayer; the sequence is AIMSCFSTCMECIFCCGVC.

It belongs to the CYSTM1 family. Expressed at very low levels in seedlings and petioles, and at higher levels in leaves. Also present in phloem sap.

Its subcellular location is the cell membrane. Modulates resistance against pathogens including oomycetes (e.g. Hyaloperonospora parasitica and Phytophthora brassicae) and fungi (e.g. Phytophthora brassicae). Controls the abscisic acid-mediated (ABA) signaling pathways. Regulator of the flowering time in response to stress (e.g. UV-C). Regulates polar lipid content; promotes phosphatidylinositol (PI) and 18:0 but prevents 18:2 and 18:3 polar lipids accumulation. The chain is Cysteine-rich and transmembrane domain-containing protein PCC1 (PCC1) from Arabidopsis thaliana (Mouse-ear cress).